Reading from the N-terminus, the 205-residue chain is Delta-aminolevulinic acid dehydratase (205 aa).

Zn(2+) contacts are provided by C117, C119, and C127. K192 functions as the Schiff-base intermediate with substrate in the catalytic mechanism. A substrate-binding site is contributed by R202.

Belongs to the ALAD family. As to quaternary structure, homooctamer. Requires Zn(2+) as cofactor.

The enzyme catalyses 2 5-aminolevulinate = porphobilinogen + 2 H2O + H(+). It functions in the pathway porphyrin-containing compound metabolism; protoporphyrin-IX biosynthesis; coproporphyrinogen-III from 5-aminolevulinate: step 1/4. Catalyzes an early step in the biosynthesis of tetrapyrroles. Binds two molecules of 5-aminolevulinate per subunit, each at a distinct site, and catalyzes their condensation to form porphobilinogen. In Ruminiclostridium josui (Clostridium josui), this protein is Delta-aminolevulinic acid dehydratase (hemB).